Consider the following 2550-residue polypeptide: Highly reducing polyketide synthase otaA (2550 aa).

In terms of domain architecture, Ketosynthase family 3 (KS3) spans 9–431; that stretch reads SEPLAIIGLA…GTNAHAVVED (423 aa). Catalysis depends on for beta-ketoacyl synthase activity residues Cys-182, His-317, and His-355. A malonyl-CoA:ACP transacylase (MAT) domain region spans residues 572-894; it reads FVFTGQGANW…KRYETNGSTI (323 aa). The tract at residues 959–1094 is N-terminal hotdog fold; sequence HELLGVPVED…GSVRAETGPP (136 aa). A dehydratase (DH) domain region spans residues 959–1252; the sequence is HELLGVPVED…DLVQLPANND (294 aa). Residues 959–1253 enclose the PKS/mFAS DH domain; the sequence is HELLGVPVED…LVQLPANNDD (295 aa). The interval 1107–1253 is C-terminal hotdog fold; that stretch reads AEPVDIAQMY…LVQLPANNDD (147 aa). The S-adenosyl-L-methionine site is built by Ile-1420 and Glu-1442. The tract at residues 1433–1612 is methyltransferase (CMeT) domain; that stretch reads HAQTGIKILE…GLRPRLIIND (180 aa). The tract at residues 1859–1919 is enoyl reductase (ER) (ER) domain; sequence PDEVKIRIHA…DQVMALRTGP (61 aa). The segment at 2166-2345 is ketoreductase (KR) domain; sequence ASYLLIGGFG…PATSVSLGSV (180 aa). In terms of domain architecture, Carrier spans 2454 to 2531; that stretch reads AAVEVVTRAI…QLAQQAADAS (78 aa). Position 2491 is an O-(pantetheine 4'-phosphoryl)serine (Ser-2491).

Pantetheine 4'-phosphate is required as a cofactor.

It carries out the reaction 4 malonyl-CoA + acetyl-CoA + 5 NADPH + 9 H(+) = 7-methylmellein + 3 CO2 + 5 NADP(+) + 5 CoA + 4 H2O. The protein operates within mycotoxin biosynthesis. Highly reducing polyketide synthase; part of the gene cluster that mediates the biosynthesis of ochratoxin A (OTA), a mycotoxin composed of a chlorinated type I polyketide dihydroisocoumarin moiety linked to L-phenylalanine, and demonstrated to have nephrotoxic, immunotoxic, genotoxic, neurotoxic, and teratogenic properties. OtaA catalyzes the condensation of one acetate and 4 malonate units to form the isocoumarin group. The pathway begins with the highly reducing polyketide synthase otaA that catalyzes the formation of the isocoumarin group during the initial stages of biosynthesis, starting from one acetate and 4 malonate units, to originate the characteristic pentaketide skeleton 7-methylmellein (7-MM) of the OTA molecule. The newly identified cyclase otaY might be involved in the polyketide cyclization reaction during the initial steps of the OTA biosynthesis. 7-MM is then oxidized into 7-carboxymellein (also called ochratoxin beta) by the cytochrome P450 monooxygenase otaC. The NRPS encoded by the otaB gene is involved in the linking of phenylalanine to the dihydroisocoumarin ring. The reaction catalyzed by NRPS results in the production of ochratoxin B (OTB), which is the non-chlorinated analog of OTA and which subsequently serves as the substrate of the halogenase otaD for chlorination activity to form the final molecular structure of OTA, containing a chlorine atom in the C-5 position of the molecule. The polypeptide is Highly reducing polyketide synthase otaA (Aspergillus niger (strain ATCC MYA-4892 / CBS 513.88 / FGSC A1513)).